The sequence spans 250 residues: UPF0758 protein RPB_0700 (250 aa).

Residues 1 to 27 (MVDPISNAAPPMPADSSERLDPPGFAE) form a disordered region. Positions 128 to 250 (VLSSWSAVID…HASLKGLKLF (123 aa)) constitute an MPN domain. The Zn(2+) site is built by His199, His201, and Asp212. Residues 199 to 212 (HNHPSGDPTPSQAD) carry the JAMM motif motif.

This sequence belongs to the UPF0758 family.

The polypeptide is UPF0758 protein RPB_0700 (Rhodopseudomonas palustris (strain HaA2)).